Reading from the N-terminus, the 634-residue chain is Chaperone protein DnaK (634 aa).

Residue Thr197 is modified to Phosphothreonine; by autocatalysis. Positions 592 to 634 are disordered; it reads IGSSVYQQPGNQPPAPGGPNANASDDKGPDDDVIDADFTETKD. The segment covering 619 to 634 has biased composition (acidic residues); it reads GPDDDVIDADFTETKD.

It belongs to the heat shock protein 70 family.

Functionally, acts as a chaperone. In Prochlorococcus marinus (strain MIT 9515), this protein is Chaperone protein DnaK.